Reading from the N-terminus, the 230-residue chain is MAKRGKKYVEAAKLVDRAAAYSATEAVELVKKTNTAKFDATVEAAFRLGVDPKKADQQIRGAVVLPHGTGKVQRVLVFAKGEKAKEAEAAGADFVGDADYIGKIQQGWFDFDVVVATPDMMGEVGKLGRVLGPKGLMPNPKTGTVTFDVTKAVNEIKAGKVEYRVDKAGNIHVPIGKVSFEDAKLVENFRTIADTLQKVKPAAAKGTYMKNVTVASTMGPGVRVDVSTLA.

Belongs to the universal ribosomal protein uL1 family. In terms of assembly, part of the 50S ribosomal subunit.

Functionally, binds directly to 23S rRNA. The L1 stalk is quite mobile in the ribosome, and is involved in E site tRNA release. Protein L1 is also a translational repressor protein, it controls the translation of the L11 operon by binding to its mRNA. The chain is Large ribosomal subunit protein uL1 from Bacillus anthracis (strain A0248).